The sequence spans 323 residues: MEDNEENKEKKTTLEDLPGVGEATAEKLRENGYDDIMAIAVASPKDLSDVTGIGEGAAAKIIAAARKFADIGNFETGEEILERRKTIQKLTTGSKNLDDLLGGGLETQAITEFFGEFGSGKTQIMHQLAVNCTMPKEKGGFDSDVMMIDTENTFRPERIIQMAKSKGLDPDETLKRIHVARAYNSHHQILLAEKAQETAKEFNIRLLIVDSLTAHFRSEYVGRGSLAERQQLLNKHMHDLLRFGTIYNAVIAVTNQVSARPDVFFGDPMAPIGGNIVGHTATFRVYLRKSKGGKRIARLIDSPYLPEGETVIQISEEGVNDGT.

115-122 is an ATP binding site; that stretch reads GEFGSGKT.

Belongs to the eukaryotic RecA-like protein family.

Its function is as follows. Involved in DNA repair and in homologous recombination. Binds and assemble on single-stranded DNA to form a nucleoprotein filament. Hydrolyzes ATP in a ssDNA-dependent manner and promotes DNA strand exchange between homologous DNA molecules. The protein is DNA repair and recombination protein RadA of Thermoplasma volcanium (strain ATCC 51530 / DSM 4299 / JCM 9571 / NBRC 15438 / GSS1).